Here is a 311-residue protein sequence, read N- to C-terminus: Delta-1-pyrroline-5-carboxylate reductase kk1I (311 aa).

Positions 1–31 (MTKRESNTLAVLGCGMVFLVSLLDLANRLLG) are cleaved as a signal peptide. N-linked (GlcNAc...) asparagine glycosylation is present at N59.

It belongs to the pyrroline-5-carboxylate reductase family.

Its pathway is secondary metabolite biosynthesis. In terms of biological role, delta-1-pyrroline-5-carboxylate reductase; part of the gene cluster that mediates the biosynthesis of KK-1, a novel cyclic depsipeptide with 10 residues which is a promising active compound with high activity against many plant pathogens, especially Botrytis cinerea. Within the pathway, kk1I catalyzes the synthesis of the L-pipecolic acid residue of KK-1 from delta-1-pyrroline-5-carboxylate (P5C), a metabolic intermediate of lysine. The nonribosomal peptide synthetase (NRPS) kk1B catalyzes the elongation and cyclization of the decapeptide chain composed of 1 D-lactic acid residue (D-Lac), 1 pipecolic acid residue (Pip), 1 aspartic acid residue (Asp), 1 isoleucine residue (Ile), 1 glycine residue (Gly), 1 tyrosine residue (Tyr) and 4 valine residues (Val). The Asp, Ile and 3 Val residues are N-methylated by the 5 methyltransferase domains from the NRPS (found in modules 3, 5, 6, 7 and 9), whereas the Tyr residue is O-methylated by the cluster encoded O-methyltransferase kk1A. The thioesterase kk1J is likely to be involved in the corrective mechanism of peptide chain synthesis. The D-lactate dehydrogenase kk1H is involved in the synthesis of D-lactic acid from pyruvic acid, which is recognized by the A domain of the first kk1B module. The pyrroline-5-carboxylate reductase kk1I is involved in the synthesis of the L-pipecolic acid residue of KK-1 from delta-1-pyrroline-5-carboxylate (P5C), a metabolic intermediate of lysine. It still is unclear how kk1C and kk1D are involved in the production of KK-1. This is Delta-1-pyrroline-5-carboxylate reductase kk1I from Curvularia clavata.